The following is an 873-amino-acid chain: MKAAPTLSKQLIFQYEHQTADFNMDELVQSAARVIAPLWPIETFAARHPWMGLEEQTFEQTARQLKQQLHVDIYPKSSIFRSAKQRGEIDETILEKKLINWLDSHQPGMQRETAEAFCKAALKLDEIPGQLLRSRQVKKLAKQAARGTIDGRKTSFIKPLSVFAGQKSAHLLDHHVIKWCKLFLDESQSAWRLPHREKGFYSAWRQLVEHDPALSRAERQRLNGWPEEPRDAMKKALRAFDISNADVQAYLEAHLLSLPGWAGMMLWRSQQSQDEEELLLEYLAVRLSMEWMLVEPYLPLPKPNPEKEMQLVPLIASWLHWGGLTPEEWLELSAAEQKARLTLARRFDDITRRRLWLEAWEQTYAAEVRKLITANKPAAADKSETVLAQFAFCIDVRSEPFRRALEKSGPFETYGTAGFFNMAIETCELGTKHSHSSLPVILKPQHRVEETAEELPFKSYQEHKKAAASLSSAFKTMKQNLLAGMLLPEVSGPWLSLQMAARSLVPRAAGQAFRNARKTWLKKPQTKLSLDRTETSEAGIPVGFTEEEKAAYARQALKMMGITDRFAPLVVICGHGSRSTNNPYASALDCGACGGASGAFNARVLAALCNLPSVRERLRSDGIFIPDDTVFAAAEHITTLDELHWLYVPELPAKAQQAFDRINSVLPDVSRTVGAERLEELPQLGYQNPRNEVERFAEDWSEIRPEWGLARNASFIIGTRRLTRGADLEGRAFLHSYDWRNDEDGSILSGIISGPGTVAQWINLQYYASTVAPHYYGSGNKATQTVTAGLGVMQGNASDLLAGLPWQSVMRSDDEIYHAPLRLLIVIEAPDDDIERLLDRDHSFRQKAENGWIHLASINPEGKWKNWTNTINE.

Residues Cys393, Asp395, His575, and Cys590 each coordinate Zn(2+).

The protein belongs to the inorganic carbon transporter (TC 9.A.2) DabA family. Forms a complex with DabB. It depends on Zn(2+) as a cofactor.

Its subcellular location is the cell membrane. In terms of biological role, part of an energy-coupled inorganic carbon pump. The protein is Probable inorganic carbon transporter subunit DabA of Bacillus licheniformis (strain ATCC 14580 / DSM 13 / JCM 2505 / CCUG 7422 / NBRC 12200 / NCIMB 9375 / NCTC 10341 / NRRL NRS-1264 / Gibson 46).